The sequence spans 522 residues: UPF0288 protein MTH_1865 (522 aa).

The protein belongs to the UPF0288 family.

The polypeptide is UPF0288 protein MTH_1865 (Methanothermobacter thermautotrophicus (strain ATCC 29096 / DSM 1053 / JCM 10044 / NBRC 100330 / Delta H) (Methanobacterium thermoautotrophicum)).